We begin with the raw amino-acid sequence, 109 residues long: Nucleoid-associated protein AHA_2212 (109 aa).

Disordered regions lie at residues 1-23 and 88-109; these read MFGK…RMQK and NKSK…KMPF. Low complexity predominate over residues 11-23; it reads MKQAQQMQERMQK.

Belongs to the YbaB/EbfC family. In terms of assembly, homodimer.

Its subcellular location is the cytoplasm. It is found in the nucleoid. Its function is as follows. Binds to DNA and alters its conformation. May be involved in regulation of gene expression, nucleoid organization and DNA protection. This is Nucleoid-associated protein AHA_2212 from Aeromonas hydrophila subsp. hydrophila (strain ATCC 7966 / DSM 30187 / BCRC 13018 / CCUG 14551 / JCM 1027 / KCTC 2358 / NCIMB 9240 / NCTC 8049).